The following is an 80-amino-acid chain: Exodeoxyribonuclease 7 small subunit (80 aa).

It belongs to the XseB family. In terms of assembly, heterooligomer composed of large and small subunits.

The protein resides in the cytoplasm. It carries out the reaction Exonucleolytic cleavage in either 5'- to 3'- or 3'- to 5'-direction to yield nucleoside 5'-phosphates.. Its function is as follows. Bidirectionally degrades single-stranded DNA into large acid-insoluble oligonucleotides, which are then degraded further into small acid-soluble oligonucleotides. The sequence is that of Exodeoxyribonuclease 7 small subunit from Phenylobacterium zucineum (strain HLK1).